The following is a 429-amino-acid chain: Glutamyl-tRNA reductase (429 aa).

Substrate-binding positions include 50–53, Ser110, 115–117, and Gln121; these read TCNR and ETQ. Cys51 (nucleophile) is an active-site residue. An NADP(+)-binding site is contributed by 190 to 195; sequence GAGEMA.

Belongs to the glutamyl-tRNA reductase family. In terms of assembly, homodimer.

It carries out the reaction (S)-4-amino-5-oxopentanoate + tRNA(Glu) + NADP(+) = L-glutamyl-tRNA(Glu) + NADPH + H(+). It functions in the pathway porphyrin-containing compound metabolism; protoporphyrin-IX biosynthesis; 5-aminolevulinate from L-glutamyl-tRNA(Glu): step 1/2. Its function is as follows. Catalyzes the NADPH-dependent reduction of glutamyl-tRNA(Glu) to glutamate 1-semialdehyde (GSA). This is Glutamyl-tRNA reductase from Campylobacter hominis (strain ATCC BAA-381 / DSM 21671 / CCUG 45161 / LMG 19568 / NCTC 13146 / CH001A).